We begin with the raw amino-acid sequence, 128 residues long: Aspartate 1-decarboxylase (128 aa).

The Schiff-base intermediate with substrate; via pyruvic acid role is filled by serine 25. A Pyruvic acid (Ser) modification is found at serine 25. A substrate-binding site is contributed by threonine 57. Tyrosine 58 acts as the Proton donor in catalysis. 73–75 (GSA) is a binding site for substrate.

This sequence belongs to the PanD family. Heterooctamer of four alpha and four beta subunits. Requires pyruvate as cofactor. Is synthesized initially as an inactive proenzyme, which is activated by self-cleavage at a specific serine bond to produce a beta-subunit with a hydroxyl group at its C-terminus and an alpha-subunit with a pyruvoyl group at its N-terminus.

It localises to the cytoplasm. The enzyme catalyses L-aspartate + H(+) = beta-alanine + CO2. Its pathway is cofactor biosynthesis; (R)-pantothenate biosynthesis; beta-alanine from L-aspartate: step 1/1. Catalyzes the pyruvoyl-dependent decarboxylation of aspartate to produce beta-alanine. This is Aspartate 1-decarboxylase from Burkholderia cenocepacia (strain HI2424).